The primary structure comprises 248 residues: Probable phosphatase VPA0505 (248 aa).

Positions 8, 10, 16, 41, 74, 102, 132, 194, and 196 each coordinate Zn(2+).

This sequence belongs to the PHP family. Zn(2+) is required as a cofactor.

This is Probable phosphatase VPA0505 from Vibrio parahaemolyticus serotype O3:K6 (strain RIMD 2210633).